Here is a 338-residue protein sequence, read N- to C-terminus: UPF0324 membrane protein HI_1643 (338 aa).

Transmembrane regions (helical) follow at residues proline 5 to leucine 23, histidine 33 to phenylalanine 55, glycine 62 to phenylalanine 84, alanine 94 to tyrosine 116, leucine 123 to valine 145, valine 155 to tryptophan 177, leucine 222 to threonine 239, isoleucine 254 to leucine 273, leucine 280 to alanine 302, and proline 312 to isoleucine 334.

The protein belongs to the UPF0324 family.

The protein localises to the cell membrane. In Haemophilus influenzae (strain ATCC 51907 / DSM 11121 / KW20 / Rd), this protein is UPF0324 membrane protein HI_1643.